The following is a 121-amino-acid chain: Large ribosomal subunit protein uL24 (121 aa).

The segment at 1-23 (MVRIESSQPRKQRKARYDAPSHM) is disordered.

This sequence belongs to the universal ribosomal protein uL24 family. In terms of assembly, part of the 50S ribosomal subunit.

In terms of biological role, one of two assembly initiator proteins, it binds directly to the 5'-end of the 23S rRNA, where it nucleates assembly of the 50S subunit. Functionally, located at the polypeptide exit tunnel on the outside of the subunit. The polypeptide is Large ribosomal subunit protein uL24 (Methanoregula boonei (strain DSM 21154 / JCM 14090 / 6A8)).